The sequence spans 291 residues: Ribose-phosphate pyrophosphokinase (291 aa).

ATP-binding positions include 34–36 (DGE) and 93–94 (RQ). Mg(2+)-binding residues include histidine 127 and aspartate 165. Lysine 188 is an active-site residue. D-ribose 5-phosphate-binding positions include arginine 190, aspartate 216, and 220–224 (STGGT).

Belongs to the ribose-phosphate pyrophosphokinase family. Class III (archaeal) subfamily. Homodimer. Mg(2+) is required as a cofactor.

It localises to the cytoplasm. It carries out the reaction D-ribose 5-phosphate + ATP = 5-phospho-alpha-D-ribose 1-diphosphate + AMP + H(+). Its pathway is metabolic intermediate biosynthesis; 5-phospho-alpha-D-ribose 1-diphosphate biosynthesis; 5-phospho-alpha-D-ribose 1-diphosphate from D-ribose 5-phosphate (route I): step 1/1. Involved in the biosynthesis of the central metabolite phospho-alpha-D-ribosyl-1-pyrophosphate (PRPP) via the transfer of pyrophosphoryl group from ATP to 1-hydroxyl of ribose-5-phosphate (Rib-5-P). This chain is Ribose-phosphate pyrophosphokinase, found in Saccharolobus solfataricus (strain ATCC 35092 / DSM 1617 / JCM 11322 / P2) (Sulfolobus solfataricus).